A 470-amino-acid polypeptide reads, in one-letter code: Cannabinoid receptor type 1B (470 aa).

At 1–113 the chain is on the extracellular side; sequence MKLALHRIAG…CFMILTPAQQ (113 aa). 2 N-linked (GlcNAc...) asparagine glycosylation sites follow: Asn78 and Asn86. The helical transmembrane segment at 114–139 threads the bilayer; sequence LVIVILAITLGTFTVLENFVVLCVIL. At 140-151 the chain is on the cytoplasmic side; that stretch reads HSHTLRSRPSYH. A helical transmembrane segment spans residues 152–172; it reads FIGSLAVADLIGSIIFVYSFL. The Extracellular portion of the chain corresponds to 173–184; sequence DFHVLHRKDSPS. Residues 185-209 traverse the membrane as a helical segment; sequence IFLFKLAGVIASFTASVGSLFLTAI. Over 210 to 229 the chain is Cytoplasmic; the sequence is DRYVSIHRPMAYKRIITKTK. Residues 230 to 252 form a helical membrane-spanning segment; it reads AVIAFSVMWAISIEFSLLPLLGW. Residues 253–270 are Extracellular-facing; sequence NCKRLHSVCSDIFPLIDE. The chain crosses the membrane as a helical span at residues 271-296; that stretch reads KYLMFWIGMTTVLLLFIIYAYMFILW. The Cytoplasmic segment spans residues 297 to 341; sequence KSHHHAVRMLSRSSQRSIIVYTSEGTKVQTVRPEQARMDLRLAKT. A helical transmembrane segment spans residues 342-362; sequence LVLILVALIICWGPLLAIMVY. Over 363-374 the chain is Extracellular; sequence DLFGRVNDFIKT. A helical transmembrane segment spans residues 375–396; the sequence is VFAFCSMLCLLNSTINPVIYAM. The Cytoplasmic segment spans residues 397 to 470; sequence RSKDLRRAFV…VTASSPAEAV (74 aa). Cys412 carries S-palmitoyl cysteine lipidation. Positions 418–434 are enriched in polar residues; sequence SLDSSAESDWNSRSVRS. The disordered stretch occupies residues 418-450; sequence SLDSSAESDWNSRSVRSTGGRAGKDRSVGGKPQ.

This sequence belongs to the G-protein coupled receptor 1 family. In terms of processing, palmitoylation at Cys-412 is important for recruitment at both plasma membrane and lipid rafts and association with G protein alpha subunits.

It is found in the cell membrane. It localises to the mitochondrion outer membrane. Its subcellular location is the cell projection. The protein resides in the axon. The protein localises to the presynapse. Its function is as follows. G-protein coupled receptor for cannabinoids. Mediates many cannabinoid-induced effects in the central nervous system (CNS), as well as in peripheral tissues. Regulates cellular respiration and energy production in response to cannabinoids. Signaling typically involves reduction in cyclic AMP. The polypeptide is Cannabinoid receptor type 1B (cnr1b) (Takifugu rubripes (Japanese pufferfish)).